The following is a 183-amino-acid chain: Large ribosomal subunit protein eL18 (183 aa).

A disordered region spans residues 151 to 183 (HFGPAPGAPRSHTKPYVRSKGHEQAKPSRRSNV).

This sequence belongs to the eukaryotic ribosomal protein eL18 family.

The protein localises to the cytoplasm. The polypeptide is Large ribosomal subunit protein eL18 (RpL18) (Plutella xylostella (Diamondback moth)).